The following is a 342-amino-acid chain: MSQRIFLPDTLANWQWPRHLNPHYAEVKKASAAWAQSFRAFQTKAQEAFDRCDFNLLASFAYPLADEGDGCDLMNLFFVIDEYSDVSTEEEVRAQKDIVMDAIRNTEKPRPAGEWIGGEVARQFWDLAKKTASSQAQKRFIDTFDEYLESVVQQAADRNNSHIRGIESYLEVRRCTIGAKPSFALLEFDMQLPDEVINHPVIKELEKSCIDMLCLGNDVVSYNLEQARDDDGHNIVTIAMNELRTDVAGAMIWVDEYHKQLESRFMENFKKVPRWGGPIDLQVARYCDGLGNWVRANDQWSFESERYFGKKGPEIIQRRWITLMPKMVSEELGPQIVDGSHL.

Mg(2+)-binding residues include D81, N217, S221, and E225. Positions 81 to 85 (DEYSD) match the DDXXD motif motif. Residues R306 and Y307 each coordinate (2E,6E)-farnesyl diphosphate.

This sequence belongs to the terpene synthase family. Requires Mg(2+) as cofactor.

The enzyme catalyses (2E,6E)-farnesyl diphosphate = Delta(6)-protoilludene + diphosphate. Functionally, delta(6)-protoilludene synthase, part of the gene cluster that mediates the biosynthesis of melleolides, a range of antifungal and phytotoxic polyketide derivatives composed of an orsellinic acid (OA) moiety esterified to various sesquiterpene alcohols. The first step in melleolides biosynthesis is performed by the delta(6)-protoilludene synthase PRO1 which catalyzes the cyclization of farnesyl diphosphate to protoilludene. The orsellinic acid synthase armB produces OA by condensing acetyl-CoA with 3 malonyl-CoA units in a three-round chain elongation reaction folowed by a C2-C7 ring closure. ArmB further catalyzes the trans-esterification of OA to the various sesquiterpene alcohols resulting from the hydroxylation of protoilludene. The melleolides cluster also includes 5 cytochrome P450 monooxygenases, 4 NAD(+)-dependent oxidoreductases, one flavin-dependent oxidoreductase, and one O-methyltransferase. The cytochrome P450 monooxygenases may be involved in protoilludene hydroxylation to elaborate melleolides with multiple alcohol groups, such as melleolide D, which carries alcohol functionalities at C-4, C-5, C-10, and C-13. The role of the NAD(+)-dependent enzymes remains unknown. Numerous melleolides, including arnamial, show 5'-O-methylation of the aromatic moiety which may be catalyzed by the methyltransferase encoded in the cluster. The flavin-dependent oxidoreductase might represent the dehydrogenase yielding the aldehyde in position 1 of arnamial and other melleolides. Finally, several halogenases, localized outside of the cluster, are able to catalyze the transfer of a single chlorine atom to the melleolide backbone, resulting in a 6'-chloromelleolide product. This Armillaria ostoyae (Armillaria root rot fungus) protein is Delta(6)-protoilludene synthase.